We begin with the raw amino-acid sequence, 369 residues long: Core-capsid bridging protein (369 aa).

The interval 15 to 50 is disordered; sequence APEIYGPPKKEEQDYKPRKLKRVKKKKKDDDDDELD. Positions 22–31 are enriched in basic and acidic residues; that stretch reads PKKEEQDYKP. Residues 32 to 41 are compositionally biased toward basic residues; that stretch reads RKLKRVKKKK. T85 carries the post-translational modification Phosphothreonine; by host. The residue at position 166 (S166) is a Phosphoserine; by host. The tract at residues 307-342 is disordered; that stretch reads PGYRGYTYRPRRRATTRRRTTTGTRRRRRRRQPVLA. The span at 315 to 338 shows a compositional bias: basic residues; the sequence is RPRRRATTRRRTTTGTRRRRRRRQ.

Belongs to the adenoviridae core-capsid bridging protein family. As to quaternary structure, monomer. Homodimer. Exists in equilibrium between monomers and dimers in solution. Interacts with the histone-like nucleoprotein; this interactions bridge the virus core to the capsid. Interacts with core protein X; this interactions bridge the virus core to the capsid. Interacts with the endosome lysis protein VI; this interactions bridge the virus core to the capsid. Interacts with the peripentonal hexons. Interacts with host NPM1; this interaction might play a role in virus assembly.

Its subcellular location is the virion. The protein localises to the host nucleus. It is found in the host nucleolus. Its function is as follows. Associates loosely with the viral DNA to form an outer shell around the nucleoprotein-DNA complex and links it with the capsid by binding the endosome lysis protein. Dissociates from the viral genome during entry. Might be involved in nuclear capsid assembly of the viral particles through its association with NPM1/nucleophosmin. The sequence is that of Core-capsid bridging protein from Homo sapiens (Human).